Reading from the N-terminus, the 105-residue chain is DNA-directed RNA polymerase RPB9 homolog (105 aa).

Residues C4, C7, C24, C26, C73, C76, and C96 each coordinate Zn(2+). The segment at 4–26 adopts a C4-type; atypical zinc-finger fold; the sequence is CKACSSCMVRTYVDGNIIFRCSC.

This sequence belongs to the Asfivirus DNA-directed RNA polymerase RPB9 homolog family. In terms of assembly, part of the viral DNA-directed RNA polymerase that consists of 8 polII-like subunits (RPB1, RPB2, RPB3, RPB5, RPB6, RPB7, RPB9, RPB10), a capping enzyme and a termination factor.

It localises to the host cytoplasm. Functionally, component of the DNA-directed RNA polymerase (RNAP) that catalyzes the transcription in the cytoplasm of viral DNA into RNA using the four ribonucleoside triphosphates as substrates. The sequence is that of DNA-directed RNA polymerase RPB9 homolog from African swine fever virus (isolate Pig/Kenya/KEN-50/1950) (ASFV).